Consider the following 549-residue polypeptide: Cobalt-dependent inorganic pyrophosphatase (549 aa).

2 consecutive CBS domains span residues 74 to 130 (EMDK…IWDS) and 252 to 310 (MTKD…VIQV). AMP-binding positions include Lys100, 116-119 (STSN), Thr253, Val258, and 278-280 (YSN).

The protein belongs to the PPase family. As to quaternary structure, homodimer. Co(2+) is required as a cofactor. It depends on Mn(2+) as a cofactor. Requires Mg(2+) as cofactor.

It carries out the reaction diphosphate + H2O = 2 phosphate + H(+). Its activity is regulated as follows. Inhibited by AMP and ADP with 25% and 35% of activity remaining, respectively, at saturating conditions. Activated 5-fold by diadenosine polyphosphates(Ap[n]A) with n&gt;2 (Ap3A, Ap4A, Ap5A, Ap6A) at saturating conditions. This Clostridium perfringens (strain 13 / Type A) protein is Cobalt-dependent inorganic pyrophosphatase.